Reading from the N-terminus, the 1024-residue chain is Zn(2)-C6 fungal-type transcription factor FTF1a (1024 aa).

The segment at residues Cys-137 to Cys-164 is a DNA-binding region (zn(2)-C6 fungal-type).

Its subcellular location is the nucleus. Its function is as follows. Zn(2)-C6 fungal-type transcription factor that has a role in the establishment of the fungus within the plant and/or the progress of the disease. Regulates the expression of virulence factors such as SIX1 and SIX6. The chain is Zn(2)-C6 fungal-type transcription factor FTF1a from Fusarium oxysporum f. sp. lycopersici (strain 4287 / CBS 123668 / FGSC 9935 / NRRL 34936) (Fusarium vascular wilt of tomato).